The following is a 352-amino-acid chain: MGKVVVGLSGGVDSSVAAAALHAQGYDVIGLTLWLMKGKGQCCSEGMVDAAFICEQLGVPHHIVDSRELFQKEIIDYLVSGYEAGITPLPCSQCNKAVKFSPMLHYARETLQTDTIATGHYARIRFSPENNRYQLLRAVDQNKDQSYFLYDLTQDVLRGTLFPLGEQTKAETRRIAQEFGLKTADKPDSQDLCLIEAHGTMRSFLDKYIAVSEGDIVDLDGKVLGKHSGIHHYTIGQRKGIGIAAAEPLYVVKLDPVMNRVIVGNRESAVSAACLVGRMNWVSIAEPTTPIRAQVQVRYRSPAVPVNVIPLENNQVKLVFDQPQFSITPGQAAVIYEGEIVLGGGIISGATP.

ATP is bound by residues 7 to 14 and Leu-33; that span reads GLSGGVDS. Cys-94 functions as the Nucleophile in the catalytic mechanism. Residues Cys-94 and Cys-193 are joined by a disulfide bond. Gly-119 contacts ATP. The segment at 143–145 is interaction with tRNA; that stretch reads KDQ. The Cysteine persulfide intermediate role is filled by Cys-193. An interaction with tRNA region spans residues 298-299; that stretch reads RY.

This sequence belongs to the MnmA/TRMU family.

It localises to the cytoplasm. It catalyses the reaction S-sulfanyl-L-cysteinyl-[protein] + uridine(34) in tRNA + AH2 + ATP = 2-thiouridine(34) in tRNA + L-cysteinyl-[protein] + A + AMP + diphosphate + H(+). Catalyzes the 2-thiolation of uridine at the wobble position (U34) of tRNA, leading to the formation of s(2)U34. The chain is tRNA-specific 2-thiouridylase MnmA from Microcystis aeruginosa (strain NIES-843 / IAM M-2473).